Here is a 257-residue protein sequence, read N- to C-terminus: Transmembrane protein 101 (257 aa).

The next 8 membrane-spanning stretches (helical) occupy residues 24–40, 52–72, 77–97, 110–130, 139–159, 182–202, 206–226, and 233–253; these read TRCP…LYAE, VPYL…MSFG, WFAL…YIGG, YSRT…AGEL, SLQS…AYSL, LFFV…YVTL, ILAV…SYWH, and FWNQ…AVIL.

It localises to the membrane. In terms of biological role, may activate NF-kappa-B signaling pathways. In Mus musculus (Mouse), this protein is Transmembrane protein 101 (Tmem101).